A 43-amino-acid polypeptide reads, in one-letter code: Ferritin light chain (43 aa).

Positions 1 to 43 (MEAALLVEKNLNQALLDLHGLASARGDPHICDFLENHFLDEEV) constitute a Ferritin-like diiron domain.

This sequence belongs to the ferritin family. In terms of assembly, oligomer of 24 subunits. There are two types of subunits: L (light) chain and H (heavy) chain. The major chain can be light or heavy, depending on the species and tissue type. The functional molecule forms a roughly spherical shell with a diameter of 12 nm and contains a central cavity into which the insoluble mineral iron core is deposited. Interacts with NCOA4.

Its subcellular location is the cytoplasmic vesicle. The protein localises to the autophagosome. It localises to the cytoplasm. The protein resides in the autolysosome. Stores iron in a soluble, non-toxic, readily available form. Important for iron homeostasis. Iron is taken up in the ferrous form and deposited as ferric hydroxides after oxidation. Also plays a role in delivery of iron to cells. Mediates iron uptake in capsule cells of the developing kidney. Delivery to lysosomes by the cargo receptor NCOA4 for autophagic degradation and release or iron. The protein is Ferritin light chain (FTL) of Ovis aries (Sheep).